The primary structure comprises 173 residues: Shikimate kinase 1 (173 aa).

An ATP-binding site is contributed by 14–19; the sequence is GAGKST. Serine 18 is a binding site for Mg(2+). The substrate site is built by aspartate 36, arginine 60, and glycine 82. Arginine 120 is a binding site for ATP. Arginine 140 is a binding site for substrate. Glutamine 157 contributes to the ATP binding site.

It belongs to the shikimate kinase family. Monomer. Requires Mg(2+) as cofactor.

The protein localises to the cytoplasm. It carries out the reaction shikimate + ATP = 3-phosphoshikimate + ADP + H(+). It functions in the pathway metabolic intermediate biosynthesis; chorismate biosynthesis; chorismate from D-erythrose 4-phosphate and phosphoenolpyruvate: step 5/7. Its function is as follows. Catalyzes the specific phosphorylation of the 3-hydroxyl group of shikimic acid using ATP as a cosubstrate. This Pectobacterium atrosepticum (strain SCRI 1043 / ATCC BAA-672) (Erwinia carotovora subsp. atroseptica) protein is Shikimate kinase 1.